The following is a 432-amino-acid chain: Probable protein phosphatase 2C 75 (432 aa).

The PPM-type phosphatase domain occupies 44–356 (VACLFTRQGK…DDCAVVCLFL (313 aa)). Residues aspartate 80, glycine 81, aspartate 301, and aspartate 347 each contribute to the Mn(2+) site. The disordered stretch occupies residues 372–408 (SPRMPALSGITRPNSKRVTPDDVDDGSDSNVSGDERS).

This sequence belongs to the PP2C family. The cofactor is Mg(2+). It depends on Mn(2+) as a cofactor.

It carries out the reaction O-phospho-L-seryl-[protein] + H2O = L-seryl-[protein] + phosphate. The enzyme catalyses O-phospho-L-threonyl-[protein] + H2O = L-threonyl-[protein] + phosphate. The sequence is that of Probable protein phosphatase 2C 75 from Oryza sativa subsp. japonica (Rice).